Reading from the N-terminus, the 249-residue chain is Phosphatidylglycerol--prolipoprotein diacylglyceryl transferase (249 aa).

The next 7 membrane-spanning stretches (helical) occupy residues 11–31, 49–69, 82–102, 116–136, 163–183, 192–212, and 223–243; these read LKIYGYGAMIALGILAAVILL, AIVGIIGGILGGKLLYIIVDI, LGNGFVIYGAIIGGAISVYLY, LVVPSVALAQGFGRIGCFLAG, LHPTQIYSSIFDFLLAFFLLW, GRVFSLYVIIYGVGRVIVEFL, and LSTSQFISLFTIIIGIFVFNI. Arg129 contacts a 1,2-diacyl-sn-glycero-3-phospho-(1'-sn-glycerol).

This sequence belongs to the Lgt family.

Its subcellular location is the cell membrane. It carries out the reaction L-cysteinyl-[prolipoprotein] + a 1,2-diacyl-sn-glycero-3-phospho-(1'-sn-glycerol) = an S-1,2-diacyl-sn-glyceryl-L-cysteinyl-[prolipoprotein] + sn-glycerol 1-phosphate + H(+). It participates in protein modification; lipoprotein biosynthesis (diacylglyceryl transfer). Its function is as follows. Catalyzes the transfer of the diacylglyceryl group from phosphatidylglycerol to the sulfhydryl group of the N-terminal cysteine of a prolipoprotein, the first step in the formation of mature lipoproteins. The sequence is that of Phosphatidylglycerol--prolipoprotein diacylglyceryl transferase from Clostridium tetani (strain Massachusetts / E88).